Reading from the N-terminus, the 549-residue chain is Oxygen-dependent choline dehydrogenase (549 aa).

4-33 is a binding site for FAD; sequence DYIIIGSGSAGSALAHRLSEDSRNSVIVLE. The Proton acceptor role is filled by His-465.

This sequence belongs to the GMC oxidoreductase family. FAD serves as cofactor.

It catalyses the reaction choline + A = betaine aldehyde + AH2. The enzyme catalyses betaine aldehyde + NAD(+) + H2O = glycine betaine + NADH + 2 H(+). It functions in the pathway amine and polyamine biosynthesis; betaine biosynthesis via choline pathway; betaine aldehyde from choline (cytochrome c reductase route): step 1/1. Its function is as follows. Involved in the biosynthesis of the osmoprotectant glycine betaine. Catalyzes the oxidation of choline to betaine aldehyde and betaine aldehyde to glycine betaine at the same rate. This is Oxygen-dependent choline dehydrogenase from Sinorhizobium fredii (strain NBRC 101917 / NGR234).